Here is a 186-residue protein sequence, read N- to C-terminus: Fucolectin-6 (186 aa).

The N-terminal stretch at Met-1–Ala-32 is a signal peptide. The interval Gln-40–Asn-186 is F5/8 type C-like. Ca(2+) is bound by residues Asn-67, Asp-70, Asn-72, and Ser-81. Disulfide bonds link Cys-82-Cys-175, Cys-114-Cys-115, and Cys-137-Cys-153. Residues His-84 and Arg-111 each coordinate alpha-L-fucose. The Cell attachment site signature appears at Arg-111–Asp-113. Residue Arg-118 participates in alpha-L-fucose binding. Residues Cys-175 and Glu-176 each coordinate Ca(2+).

It belongs to the fucolectin family. In terms of assembly, homotrimer. In terms of tissue distribution, gill mucous cells.

The protein resides in the secreted. Acts as a defensive agent. Recognizes blood group fucosylated oligosaccharides including A, B, H and Lewis B-type antigens. Does not recognize Lewis A antigen and has low affinity for monovalent haptens. This chain is Fucolectin-6, found in Anguilla japonica (Japanese eel).